The following is a 213-amino-acid chain: Thymidylate kinase (213 aa).

10 to 17 (GLEGAGKT) serves as a coordination point for ATP.

It belongs to the thymidylate kinase family.

The enzyme catalyses dTMP + ATP = dTDP + ADP. Phosphorylation of dTMP to form dTDP in both de novo and salvage pathways of dTTP synthesis. The protein is Thymidylate kinase of Shigella boydii serotype 18 (strain CDC 3083-94 / BS512).